Consider the following 351-residue polypeptide: UDP-3-O-acylglucosamine N-acyltransferase (351 aa).

His257 functions as the Proton acceptor in the catalytic mechanism.

Belongs to the transferase hexapeptide repeat family. LpxD subfamily. Homotrimer.

The enzyme catalyses a UDP-3-O-[(3R)-3-hydroxyacyl]-alpha-D-glucosamine + a (3R)-hydroxyacyl-[ACP] = a UDP-2-N,3-O-bis[(3R)-3-hydroxyacyl]-alpha-D-glucosamine + holo-[ACP] + H(+). Its pathway is bacterial outer membrane biogenesis; LPS lipid A biosynthesis. In terms of biological role, catalyzes the N-acylation of UDP-3-O-acylglucosamine using 3-hydroxyacyl-ACP as the acyl donor. Is involved in the biosynthesis of lipid A, a phosphorylated glycolipid that anchors the lipopolysaccharide to the outer membrane of the cell. The polypeptide is UDP-3-O-acylglucosamine N-acyltransferase (Brucella abortus (strain S19)).